A 280-amino-acid polypeptide reads, in one-letter code: Protein MGF 505-3R (280 aa).

This sequence belongs to the asfivirus MGF 505 family.

Functionally, plays a role in virus cell tropism, and may be required for efficient virus replication in macrophages. The sequence is that of Protein MGF 505-3R from African swine fever virus (strain Badajoz 1971 Vero-adapted) (Ba71V).